Consider the following 192-residue polypeptide: dTTP/UTP pyrophosphatase (192 aa).

Catalysis depends on Asp-70, which acts as the Proton acceptor.

It belongs to the Maf family. YhdE subfamily. The cofactor is a divalent metal cation.

It is found in the cytoplasm. The catalysed reaction is dTTP + H2O = dTMP + diphosphate + H(+). The enzyme catalyses UTP + H2O = UMP + diphosphate + H(+). Nucleoside triphosphate pyrophosphatase that hydrolyzes dTTP and UTP. May have a dual role in cell division arrest and in preventing the incorporation of modified nucleotides into cellular nucleic acids. In Alkaliphilus metalliredigens (strain QYMF), this protein is dTTP/UTP pyrophosphatase.